The primary structure comprises 218 residues: GTP cyclohydrolase 1 (218 aa).

Positions 109, 112, and 180 each coordinate Zn(2+).

This sequence belongs to the GTP cyclohydrolase I family. In terms of assembly, toroid-shaped homodecamer, composed of two pentamers of five dimers.

It catalyses the reaction GTP + H2O = 7,8-dihydroneopterin 3'-triphosphate + formate + H(+). Its pathway is cofactor biosynthesis; 7,8-dihydroneopterin triphosphate biosynthesis; 7,8-dihydroneopterin triphosphate from GTP: step 1/1. The sequence is that of GTP cyclohydrolase 1 from Actinobacillus pleuropneumoniae serotype 5b (strain L20).